Consider the following 1070-residue polypeptide: Ubiquitin-protein ligase E3B (1070 aa).

N-acetylmethionine is present on Met-1. The 30-residue stretch at 29–58 (RERSAVTIQALVRSFLCRRRLHRDIRKEID) folds into the IQ domain. Ser-421 is subject to Phosphoserine. Residues 704 to 1070 (SQHAMKGVIR…ISMNTGFELS (367 aa)) form the HECT domain. The active-site Glycyl thioester intermediate is the Cys-1038.

As to expression, widely expressed. High expression is observed in developing central nervous system.

The protein resides in the postsynaptic density. The enzyme catalyses S-ubiquitinyl-[E2 ubiquitin-conjugating enzyme]-L-cysteine + [acceptor protein]-L-lysine = [E2 ubiquitin-conjugating enzyme]-L-cysteine + N(6)-ubiquitinyl-[acceptor protein]-L-lysine.. Its pathway is protein modification; protein ubiquitination. Functionally, E3 ubiquitin-protein ligase which accepts ubiquitin from an E2 ubiquitin-conjugating enzyme in the form of a thioester and then directly transfers the ubiquitin to targeted substrates. Ubiquitinates BCKDK and targets it for degradation, thereby regulating various metabolic processes. Involved in the positive regulation of neurite branching in hippocampal neurons and the control of neuronal spine number and morphology, through the ubiquitination of PPP3CC. The protein is Ubiquitin-protein ligase E3B (Ube3b) of Mus musculus (Mouse).